The primary structure comprises 375 residues: Neutral protease 2 homolog MGYG_00813 (375 aa).

Residues 1-19 form the signal peptide; it reads MQVIVALAALSSLAAPALG. Residues 20–190 constitute a propeptide that is removed on maturation; it reads FSIPRGVPVS…SGPLTRIGKR (171 aa). Cystine bridges form between C198-C268 and C275-C293. H318 provides a ligand contact to Zn(2+). Residue E319 is part of the active site. 2 residues coordinate Zn(2+): H322 and D333.

Belongs to the peptidase M35 family. Zn(2+) serves as cofactor.

The protein localises to the secreted. The catalysed reaction is Preferential cleavage of bonds with hydrophobic residues in P1'. Also 3-Asn-|-Gln-4 and 8-Gly-|-Ser-9 bonds in insulin B chain.. Functionally, secreted metalloproteinase that allows assimilation of proteinaceous substrates. Shows high activities on basic nuclear substrates such as histone and protamine. May be involved in virulence. The polypeptide is Neutral protease 2 homolog MGYG_00813 (Arthroderma gypseum (strain ATCC MYA-4604 / CBS 118893) (Microsporum gypseum)).